The sequence spans 162 residues: Shikimate kinase (162 aa).

Residue 11–16 (GSGKSS) participates in ATP binding. Ser-15 contacts Mg(2+). Residues Asp-33, Arg-57, and Gly-80 each coordinate substrate. Arg-116 provides a ligand contact to ATP. Arg-132 is a substrate binding site.

It belongs to the shikimate kinase family. As to quaternary structure, monomer. Mg(2+) is required as a cofactor.

It is found in the cytoplasm. It carries out the reaction shikimate + ATP = 3-phosphoshikimate + ADP + H(+). The protein operates within metabolic intermediate biosynthesis; chorismate biosynthesis; chorismate from D-erythrose 4-phosphate and phosphoenolpyruvate: step 5/7. In terms of biological role, catalyzes the specific phosphorylation of the 3-hydroxyl group of shikimic acid using ATP as a cosubstrate. This is Shikimate kinase from Helicobacter pylori (strain J99 / ATCC 700824) (Campylobacter pylori J99).